The sequence spans 58 residues: Large ribosomal subunit protein uL30 (58 aa).

The protein belongs to the universal ribosomal protein uL30 family. In terms of assembly, part of the 50S ribosomal subunit.

The polypeptide is Large ribosomal subunit protein uL30 (Trichlorobacter lovleyi (strain ATCC BAA-1151 / DSM 17278 / SZ) (Geobacter lovleyi)).